The sequence spans 341 residues: MNYREAGVDIEAGRAFVGDIRSLVESTRRPGVLGGLGGFGGFFELPSGYRQPVLVSGTDGVGTKLKIAHQVGRHDSIGIDLVAMCVNDILTAGAEPLYFLDYLATGRLDREQLTAVVQGIAAGCRESGCALLGGETAEMPGFYEAGEYDVAGFAVGIAEKSELLDGSQVQLGDVAIALASSGVHSNGYSLVRKVVANSGLDWTSSQTIFEGQSLGDVFLTPTRLYVKPILAAKAQKIPIHGMAHITGGGLPENLPRCLGPNQTVAIDLESWKWPTVFRWLAKQGNIADSEMFNTFNMGVGLVVIVPAAAETQALKFFKAQGQTAWTLGEVVTGDGTLIGLP.

Belongs to the AIR synthase family.

The protein localises to the cytoplasm. The catalysed reaction is 2-formamido-N(1)-(5-O-phospho-beta-D-ribosyl)acetamidine + ATP = 5-amino-1-(5-phospho-beta-D-ribosyl)imidazole + ADP + phosphate + H(+). The protein operates within purine metabolism; IMP biosynthesis via de novo pathway; 5-amino-1-(5-phospho-D-ribosyl)imidazole from N(2)-formyl-N(1)-(5-phospho-D-ribosyl)glycinamide: step 2/2. This chain is Phosphoribosylformylglycinamidine cyclo-ligase, found in Synechococcus elongatus (strain ATCC 33912 / PCC 7942 / FACHB-805) (Anacystis nidulans R2).